The following is a 183-amino-acid chain: ATP synthase subunit delta (183 aa).

The protein belongs to the ATPase delta chain family. As to quaternary structure, F-type ATPases have 2 components, F(1) - the catalytic core - and F(0) - the membrane proton channel. F(1) has five subunits: alpha(3), beta(3), gamma(1), delta(1), epsilon(1). F(0) has three main subunits: a(1), b(2) and c(10-14). The alpha and beta chains form an alternating ring which encloses part of the gamma chain. F(1) is attached to F(0) by a central stalk formed by the gamma and epsilon chains, while a peripheral stalk is formed by the delta and b chains.

It is found in the cell inner membrane. In terms of biological role, f(1)F(0) ATP synthase produces ATP from ADP in the presence of a proton or sodium gradient. F-type ATPases consist of two structural domains, F(1) containing the extramembraneous catalytic core and F(0) containing the membrane proton channel, linked together by a central stalk and a peripheral stalk. During catalysis, ATP synthesis in the catalytic domain of F(1) is coupled via a rotary mechanism of the central stalk subunits to proton translocation. Functionally, this protein is part of the stalk that links CF(0) to CF(1). It either transmits conformational changes from CF(0) to CF(1) or is implicated in proton conduction. The protein is ATP synthase subunit delta of Thermotoga maritima (strain ATCC 43589 / DSM 3109 / JCM 10099 / NBRC 100826 / MSB8).